The primary structure comprises 65 residues: uncharacterized protein (65 aa).

Positions 1–22 (MKFIKLFTFLVYLFVTLTNVFA) are cleaved as a signal peptide.

This is an uncharacterized protein from Invertebrate iridescent virus 6 (IIV-6).